The primary structure comprises 180 residues: 5'(3')-deoxyribonucleotidase (180 aa).

Asp-9 (nucleophile) is an active-site residue. The Mg(2+) site is built by Asp-9, Asp-11, and Asp-134. Asp-11 (proton donor) is an active-site residue.

The protein belongs to the 5'(3')-deoxyribonucleotidase family. It depends on Mg(2+) as a cofactor.

Functionally, dephosphorylates nucleoside monophosphates such as the 5' and 2'(3')-phosphates of deoxyribonucleotides in vitro. This Clostridium acetobutylicum (strain ATCC 824 / DSM 792 / JCM 1419 / IAM 19013 / LMG 5710 / NBRC 13948 / NRRL B-527 / VKM B-1787 / 2291 / W) protein is 5'(3')-deoxyribonucleotidase.